A 195-amino-acid polypeptide reads, in one-letter code: ATP-dependent Clp protease proteolytic subunit (195 aa).

S98 acts as the Nucleophile in catalysis. The active site involves H123.

It belongs to the peptidase S14 family. In terms of assembly, fourteen ClpP subunits assemble into 2 heptameric rings which stack back to back to give a disk-like structure with a central cavity, resembling the structure of eukaryotic proteasomes.

The protein localises to the cytoplasm. It carries out the reaction Hydrolysis of proteins to small peptides in the presence of ATP and magnesium. alpha-casein is the usual test substrate. In the absence of ATP, only oligopeptides shorter than five residues are hydrolyzed (such as succinyl-Leu-Tyr-|-NHMec, and Leu-Tyr-Leu-|-Tyr-Trp, in which cleavage of the -Tyr-|-Leu- and -Tyr-|-Trp bonds also occurs).. In terms of biological role, cleaves peptides in various proteins in a process that requires ATP hydrolysis. Has a chymotrypsin-like activity. Plays a major role in the degradation of misfolded proteins. The sequence is that of ATP-dependent Clp protease proteolytic subunit from Sulfurovum sp. (strain NBC37-1).